We begin with the raw amino-acid sequence, 573 residues long: Chromosomal replication initiator protein DnaA (573 aa).

Residues methionine 1 to arginine 85 are domain I, interacts with DnaA modulators. The interval arginine 85–valine 231 is domain II. The tract at residues valine 91–serine 232 is disordered. Positions proline 116 to glutamine 169 are enriched in low complexity. Positions glutamine 178 to serine 191 are enriched in polar residues. Residues serine 202–alanine 213 show a composition bias toward pro residues. Residues serine 232–serine 448 form a domain III, AAA+ region region. Residues glycine 276, glycine 278, lysine 279, and threonine 280 each contribute to the ATP site. The segment at serine 449–asparagine 573 is domain IV, binds dsDNA.

It belongs to the DnaA family. As to quaternary structure, oligomerizes as a right-handed, spiral filament on DNA at oriC.

It localises to the cytoplasm. Its function is as follows. Plays an essential role in the initiation and regulation of chromosomal replication. ATP-DnaA binds to the origin of replication (oriC) to initiate formation of the DNA replication initiation complex once per cell cycle. Binds the DnaA box (a 9 base pair repeat at the origin) and separates the double-stranded (ds)DNA. Forms a right-handed helical filament on oriC DNA; dsDNA binds to the exterior of the filament while single-stranded (ss)DNA is stabiized in the filament's interior. The ATP-DnaA-oriC complex binds and stabilizes one strand of the AT-rich DNA unwinding element (DUE), permitting loading of DNA polymerase. After initiation quickly degrades to an ADP-DnaA complex that is not apt for DNA replication. Binds acidic phospholipids. The chain is Chromosomal replication initiator protein DnaA from Corynebacterium efficiens (strain DSM 44549 / YS-314 / AJ 12310 / JCM 11189 / NBRC 100395).